We begin with the raw amino-acid sequence, 477 residues long: Aspartyl/glutamyl-tRNA(Asn/Gln) amidotransferase subunit B (477 aa).

Belongs to the GatB/GatE family. GatB subfamily. In terms of assembly, heterotrimer of A, B and C subunits.

The enzyme catalyses L-glutamyl-tRNA(Gln) + L-glutamine + ATP + H2O = L-glutaminyl-tRNA(Gln) + L-glutamate + ADP + phosphate + H(+). It carries out the reaction L-aspartyl-tRNA(Asn) + L-glutamine + ATP + H2O = L-asparaginyl-tRNA(Asn) + L-glutamate + ADP + phosphate + 2 H(+). Its function is as follows. Allows the formation of correctly charged Asn-tRNA(Asn) or Gln-tRNA(Gln) through the transamidation of misacylated Asp-tRNA(Asn) or Glu-tRNA(Gln) in organisms which lack either or both of asparaginyl-tRNA or glutaminyl-tRNA synthetases. The reaction takes place in the presence of glutamine and ATP through an activated phospho-Asp-tRNA(Asn) or phospho-Glu-tRNA(Gln). The protein is Aspartyl/glutamyl-tRNA(Asn/Gln) amidotransferase subunit B of Nitrosococcus oceani (strain ATCC 19707 / BCRC 17464 / JCM 30415 / NCIMB 11848 / C-107).